Reading from the N-terminus, the 532-residue chain is MITSSLLSRPGRTAPAGSAALRCRDRLAQRVADQVGPDGLVKAPCASRVLESSLLLRLLTVEGYAPHVRERLTRYLRNRLEHRPPDAIQGAVARAALGERLPGGCFAERALASFDHFTADRKRLMFTTLLAELGVTVFPRTRPEAFTARGQQSWLQAEMAALKIMTAYGTGTTGLLTERDWFLLAPAVRPGPVWEGNHFARLLALLALRKNPAHRGAVRRTLEAVTADLRPDGGLPFITGMDIFATAIAGLALTGPAACAHAGHRPVRCGTGPLPAAMADALATRQNPDGGFAFTPGVRQSDVDDTSYTVEFLRVAGPYRHRSAIAAAERYLLAVRNPDGGFPTFARGTPSEIAMTAAAVNALAPNPAHRTVVDEALAFLTRRRQPDGILERSWSRNVTNAVFRTTLACAAAGPGAPPGLSRAAGTTKRQATRYLASVQNLDGGWGHHPGDASDPISTAYAVIALSRDGGHPTALARALDHLVRAQRPDGGYRSRPDQAGPRPLLYDVPALADVCVLLGLAHAVGPTARPRV.

Positions 121, 122, 152, and 154 each coordinate (2E,6E)-farnesyl diphosphate. Glu158 provides a ligand contact to Mg(2+). PFTB repeat units lie at residues 275-317 (PAAM…RVAG), 325-367 (IAAA…APNP), 428-469 (KRQA…SRDG), and 475-518 (LARA…CVLL). Asp304 (proton donor) is an active-site residue. Arg502 is a (2E,6E)-farnesyl diphosphate binding site.

It belongs to the terpene cyclase/mutase family. Requires Mg(2+) as cofactor. It depends on Ni(2+) as a cofactor. Co(2+) serves as cofactor.

The catalysed reaction is (2E,6E)-farnesyl diphosphate = (5S,9S,10S)-drim-7-en-11-yl diphosphate. Catalyzes the cyclization of farnesyl diphosphate (FPP) to drimenyl diphosphate. In Streptantibioticus cattleyicolor (strain ATCC 35852 / DSM 46488 / JCM 4925 / NBRC 14057 / NRRL 8057) (Streptomyces cattleya), this protein is Drimenyl diphosphate synthase.